The following is a 759-amino-acid chain: Mitogen-activated protein kinase kinase kinase 1a (759 aa).

Basic and acidic residues-rich tracts occupy residues 1–17 (MIEE…DRGS), 25–36 (SFEDKGSSHDWK), and 52–64 (AKKD…KVDS). Disordered stretches follow at residues 1–90 (MIEE…NLSK), 122–160 (LGIE…SHDF), 165–184 (SRVD…LAPM), and 195–239 (RKHR…PDPL). The span at 72 to 85 (VHSTSSPRLSPASS) shows a compositional bias: low complexity. The region spanning 426-679 (WAKGEFLGSG…CDMLLAHPFI (254 aa)) is the Protein kinase domain. Residues 432-440 (LGSGTFGSV) and lysine 454 contribute to the ATP site. Residue aspartate 549 is the Proton acceptor of the active site.

Belongs to the protein kinase superfamily. STE Ser/Thr protein kinase family. MAP kinase kinase kinase subfamily.

Its subcellular location is the cell membrane. It catalyses the reaction L-seryl-[protein] + ATP = O-phospho-L-seryl-[protein] + ADP + H(+). The enzyme catalyses L-threonyl-[protein] + ATP = O-phospho-L-threonyl-[protein] + ADP + H(+). The CERK1, MEKK1a/b, MKK1a/b/c and MPK4a/b proteins are involved in pathogen defense. The pathway induces rapid growth inhibition, cell wall depositions and accumulation of defense-related transcripts. This protein is required for responses to chitin and acts redundantly with MEKK1b. This is Mitogen-activated protein kinase kinase kinase 1a from Physcomitrium patens (Spreading-leaved earth moss).